The chain runs to 206 residues: Small ribosomal subunit protein uS4 (206 aa).

The region spanning G96 to K156 is the S4 RNA-binding domain.

The protein belongs to the universal ribosomal protein uS4 family. In terms of assembly, part of the 30S ribosomal subunit. Contacts protein S5. The interaction surface between S4 and S5 is involved in control of translational fidelity.

In terms of biological role, one of the primary rRNA binding proteins, it binds directly to 16S rRNA where it nucleates assembly of the body of the 30S subunit. Functionally, with S5 and S12 plays an important role in translational accuracy. The polypeptide is Small ribosomal subunit protein uS4 (Haemophilus influenzae (strain 86-028NP)).